The chain runs to 130 residues: MRHRNGLRKLNRTSSHRLAMFRNLTNSLLEHEIIKTTLPKAKELRRVVEPVITLGKNPSLAGKRLAFDRLRNRDNVIKIFSELGPRYQNRNGGYIRILKCGFRRGDNAPMAIVELLDRPEAGIISNDSAD.

The protein belongs to the bacterial ribosomal protein bL17 family. Part of the 50S ribosomal subunit. Contacts protein L32.

The polypeptide is Large ribosomal subunit protein bL17 (Nitrosomonas europaea (strain ATCC 19718 / CIP 103999 / KCTC 2705 / NBRC 14298)).